The chain runs to 424 residues: Keratin, type I cytoskeletal 20 (424 aa).

The interval 1-69 (MDFSRRSFHR…TGGGDLFVGN (69 aa)) is head. Ser-13 is modified (phosphoserine; by MAPKAPK2, MAPKAPK3 and PKC). A coil 1A region spans residues 70 to 105 (EKMAMQNLNDRLASYLEKVRTLEQSNSKLEVQIKQW). The 312-residue stretch at 70–381 (EKMAMQNLND…RLLEGEDVKT (312 aa)) folds into the IF rod domain. Residues 106-123 (YETNAPRAGRDYSAYYRQ) form a linker 1 region. A coil 1B region spans residues 124 to 215 (IEELRSQIKD…KEHQEEVDGL (92 aa)). The tract at residues 216 to 238 (HKHLGNTVNVEVDAAPGLNLGVI) is linker 12. The segment at 239 to 377 (MNEMRQKYEV…ATYRRLLEGE (139 aa)) is coil 2. A tail region spans residues 378–424 (DVKTTEYQLSTLEERDIKKTRKIKTVVQEVVDGKVVSSEVKEVEENI).

Belongs to the intermediate filament family. In terms of assembly, heterotetramer of two type I and two type II keratins. Associates with KRT8. Post-translationally, hyperphosphorylation at Ser-13 occurs during the early stages of apoptosis but becomes less prominent during the later stages. Phosphorylation at Ser-13 also increases in response to stress brought on by cell injury. In terms of processing, proteolytically cleaved by caspases during apoptosis. Cleavage occurs at Asp-228. Expressed predominantly in the intestinal epithelium. Expressed in luminal cells of colonic mucosa. Also expressed in the Merkel cells of keratinized oral mucosa; specifically at the tips of some rete ridges of the gingival mucosa, in the basal layer of the palatal mucosa and in the taste buds of lingual mucosa.

It localises to the cytoplasm. Functionally, plays a significant role in maintaining keratin filament organization in intestinal epithelia. When phosphorylated, plays a role in the secretion of mucin in the small intestine. In Homo sapiens (Human), this protein is Keratin, type I cytoskeletal 20 (KRT20).